Here is a 99-residue protein sequence, read N- to C-terminus: Integration host factor subunit alpha (99 aa).

The protein belongs to the bacterial histone-like protein family. Heterodimer of an alpha and a beta chain.

Its function is as follows. This protein is one of the two subunits of integration host factor, a specific DNA-binding protein that functions in genetic recombination as well as in transcriptional and translational control. This chain is Integration host factor subunit alpha, found in Pseudoalteromonas translucida (strain TAC 125).